Here is a 521-residue protein sequence, read N- to C-terminus: MFS siderochrome iron transporter 1 (521 aa).

A compositionally biased stretch (polar residues) spans 1–10 (MDKTASLTSQ). Residues 1–29 (MDKTASLTSQDAEKHDPDALRKERATDPP) form a disordered region. Residues 11–29 (DAEKHDPDALRKERATDPP) show a composition bias toward basic and acidic residues. 5 consecutive transmembrane segments (helical) span residues 62–82 (WGLF…PLMG), 99–119 (FLSL…AFGC), 126–146 (WSFN…GGTQ), 148–168 (FVAL…NMPV), and 187–207 (ILSI…WPLI). N-linked (GlcNAc...) asparagine glycosylation occurs at Asn209. 6 consecutive transmembrane segments (helical) span residues 229 to 249 (YLLF…FFVF), 330 to 350 (LAWS…ASTL), 379 to 399 (VIIA…VEQP), 404 to 424 (KGTL…TTTA), 431 to 451 (LGWN…LYAI), and 466 to 486 (GLTA…ALYA). An N-linked (GlcNAc...) asparagine glycan is attached at Asn487. Residues 491–511 (AVPVYVSGALIIASGAMALLL) traverse the membrane as a helical segment.

It belongs to the major facilitator superfamily.

The protein resides in the membrane. Functionally, major facilitator transporter probably involved in siderophore basidioferrin transmembrane transport. This Ceriporiopsis subvermispora (strain B) (White-rot fungus) protein is MFS siderochrome iron transporter 1.